A 118-amino-acid chain; its full sequence is Waprin-Enh1 (118 aa).

Positions methionine 1 to serine 24 are cleaved as a signal peptide. WAP domains follow at residues lysine 25–arginine 72 and proline 74–lysine 118. Intrachain disulfides connect cysteine 30-cysteine 63, cysteine 40-cysteine 67, cysteine 50-cysteine 62, cysteine 56-cysteine 71, cysteine 81-cysteine 109, cysteine 88-cysteine 113, cysteine 96-cysteine 108, and cysteine 102-cysteine 117.

This sequence belongs to the venom waprin family. Expressed by the venom gland.

It is found in the secreted. Functionally, damages membranes of susceptible bacteria. Has no hemolytic activity. Not toxic to mice. Does not inhibit the proteinases elastase and cathepsin G. In Pseudoferania polylepis (Macleay's water snake), this protein is Waprin-Enh1.